The chain runs to 502 residues: MKVRTRIAPSPTGFPHVGTAYIALFNMCFAKQHGGEFILRIEDTDQLRSTPESEKMILDSLRWLGLNWSEGPDVGGPHAPYRQSERMGIYKQYALELVEKGHAFYCFATAEELDQMRAEQQARGETPKYDGRGLKLSQEEVARRLEAGEPHVIRMKVPEEGVCKFNDLLRGEVEIPWAQVDMQVLLKTDGLPTYHLANVVDDHLMEITHVLRGEEWLPSAPKHQLLYQYFGWEMPTLCHMPLLRNPDKSKLSKRKNPTSINYYRDIGVLPEALLNYLGRMGWSMPDEREVFTLQDMMDNFDIQRVSLGGPIFDVEKLNWLNGQWIKGLTPGQLLDRLLTWKSDRSTLEDIAAAIQPRINLLSEAVNWAGFYFNHMPQITAEMFESKKLTQEQVRQSLQFAIWRLESQFTWNNDTVSQTLMDLANQMGIKLRDFMPTFFIAIAGSTSSTPVMQSMVTLGPDLTFARLRHALEIVGAPSKKEVKNWEKLNESLKLPKNEATSEA.

The 'HIGH' region signature appears at 9–19 (PSPTGFPHVGT). The 'KMSKS' region motif lies at 250-254 (KLSKR). Lys-253 contributes to the ATP binding site.

It belongs to the class-I aminoacyl-tRNA synthetase family. Glutamate--tRNA ligase type 1 subfamily. As to quaternary structure, monomer.

The protein localises to the cytoplasm. The catalysed reaction is tRNA(Glu) + L-glutamate + ATP = L-glutamyl-tRNA(Glu) + AMP + diphosphate. Its function is as follows. Catalyzes the attachment of glutamate to tRNA(Glu) in a two-step reaction: glutamate is first activated by ATP to form Glu-AMP and then transferred to the acceptor end of tRNA(Glu). This Acinetobacter baumannii (strain AYE) protein is Glutamate--tRNA ligase.